Consider the following 454-residue polypeptide: tRNA-2-methylthio-N(6)-dimethylallyladenosine synthase (454 aa).

In terms of domain architecture, MTTase N-terminal spans 6–122 (RRYHITTYGC…LQDLLEQVAS (117 aa)). [4Fe-4S] cluster-binding residues include C15, C51, C85, C157, C161, and C164. The region spanning 143 to 384 (RDSAVTAWVN…GVCAELRSQR (242 aa)) is the Radical SAM core domain. The TRAM domain occupies 383 to 447 (QRYANRIEEV…SFSLTGEPLS (65 aa)).

This sequence belongs to the methylthiotransferase family. MiaB subfamily. As to quaternary structure, monomer. The cofactor is [4Fe-4S] cluster.

It is found in the cytoplasm. The enzyme catalyses N(6)-dimethylallyladenosine(37) in tRNA + (sulfur carrier)-SH + AH2 + 2 S-adenosyl-L-methionine = 2-methylsulfanyl-N(6)-dimethylallyladenosine(37) in tRNA + (sulfur carrier)-H + 5'-deoxyadenosine + L-methionine + A + S-adenosyl-L-homocysteine + 2 H(+). Its function is as follows. Catalyzes the methylthiolation of N6-(dimethylallyl)adenosine (i(6)A), leading to the formation of 2-methylthio-N6-(dimethylallyl)adenosine (ms(2)i(6)A) at position 37 in tRNAs that read codons beginning with uridine. This is tRNA-2-methylthio-N(6)-dimethylallyladenosine synthase from Acaryochloris marina (strain MBIC 11017).